We begin with the raw amino-acid sequence, 240 residues long: 1-(5-phosphoribosyl)-5-[(5-phosphoribosylamino)methylideneamino] imidazole-4-carboxamide isomerase (240 aa).

The active-site Proton acceptor is aspartate 10. The active-site Proton donor is aspartate 132.

It belongs to the HisA/HisF family.

It is found in the cytoplasm. The catalysed reaction is 1-(5-phospho-beta-D-ribosyl)-5-[(5-phospho-beta-D-ribosylamino)methylideneamino]imidazole-4-carboxamide = 5-[(5-phospho-1-deoxy-D-ribulos-1-ylimino)methylamino]-1-(5-phospho-beta-D-ribosyl)imidazole-4-carboxamide. It functions in the pathway amino-acid biosynthesis; L-histidine biosynthesis; L-histidine from 5-phospho-alpha-D-ribose 1-diphosphate: step 4/9. This is 1-(5-phosphoribosyl)-5-[(5-phosphoribosylamino)methylideneamino] imidazole-4-carboxamide isomerase from Methanocella arvoryzae (strain DSM 22066 / NBRC 105507 / MRE50).